The sequence spans 406 residues: Arginine deiminase (406 aa).

C396 functions as the Amidino-cysteine intermediate in the catalytic mechanism.

It belongs to the arginine deiminase family.

Its subcellular location is the cytoplasm. The catalysed reaction is L-arginine + H2O = L-citrulline + NH4(+). It participates in amino-acid degradation; L-arginine degradation via ADI pathway; carbamoyl phosphate from L-arginine: step 1/2. The protein is Arginine deiminase of Vibrio vulnificus (strain YJ016).